A 499-amino-acid chain; its full sequence is Glycerol kinase (499 aa).

Thr-14 provides a ligand contact to ADP. ATP is bound by residues Thr-14, Thr-15, and Ser-16. Thr-14 is a binding site for sn-glycerol 3-phosphate. Residue Arg-18 coordinates ADP. Sn-glycerol 3-phosphate is bound by residues Arg-84, Glu-85, Tyr-136, and Asp-245. Arg-84, Glu-85, Tyr-136, Asp-245, and Gln-246 together coordinate glycerol. ADP is bound by residues Thr-267 and Gly-310. The ATP site is built by Thr-267, Gly-310, Gln-314, and Gly-411. ADP-binding residues include Gly-411 and Asn-415.

The protein belongs to the FGGY kinase family.

It catalyses the reaction glycerol + ATP = sn-glycerol 3-phosphate + ADP + H(+). It participates in polyol metabolism; glycerol degradation via glycerol kinase pathway; sn-glycerol 3-phosphate from glycerol: step 1/1. With respect to regulation, inhibited by fructose 1,6-bisphosphate (FBP). Functionally, key enzyme in the regulation of glycerol uptake and metabolism. Catalyzes the phosphorylation of glycerol to yield sn-glycerol 3-phosphate. The sequence is that of Glycerol kinase from Nitrosomonas eutropha (strain DSM 101675 / C91 / Nm57).